The following is a 363-amino-acid chain: Regulator of G-protein signaling rgs-3 (363 aa).

Residues 1 to 70 (MWRSYKAETP…NSSATSPTPS (70 aa)) are disordered. A compositionally biased stretch (basic and acidic residues) spans 21 to 35 (LNLHDSSESDHEGRQ). 2 stretches are compositionally biased toward low complexity: residues 36 to 50 (SRSA…APAS) and 58 to 70 (PITN…PTPS). RGS domains are found at residues 112-225 (NCAN…LEYL) and 240-359 (SFEG…IDLL).

Post-translationally, may be phosphorylated and activated by egl-4.

In terms of biological role, modulates chemotaxis responses by regulating positively the sensitivity to CO2 levels in BAG neurons and by regulating negatively the sensitivity to quinine in ASH sensory neurons. In Caenorhabditis elegans, this protein is Regulator of G-protein signaling rgs-3 (rgs-3).